A 299-amino-acid polypeptide reads, in one-letter code: GDNF family receptor alpha-4 (299 aa).

The N-terminal stretch at 1–20 (MVRCLGPALLLLLLLGSASS) is a signal peptide. Positions 145–198 (RGLSPAHRPPAAQASPPGLSGLVHPSAQRPRRLPAGPGRPLPARLRGPRGVPAG) are disordered. The segment covering 177-198 (LPAGPGRPLPARLRGPRGVPAG) has biased composition (low complexity). Asn208 is a glycosylation site (N-linked (GlcNAc...) asparagine). A lipid anchor (GPI-anchor amidated glycine) is attached at Gly278. Positions 279–299 (RALERRSLLSILPVLALPALL) are cleaved as a propeptide — removed in mature form.

This sequence belongs to the GDNFR family. As to quaternary structure, interacts with ARTN ligand and RET: forms a 2:2:2 ternary complex composed of ARTN ligand, GFRA3 and RET receptor. Interacts with SORL1. Predominantly expressed in the adult thyroid gland. Low levels also found in fetal adrenal and thyroid glands.

Its subcellular location is the cell membrane. It is found in the secreted. Receptor for persephin (PSPN), a growth factor that exhibits neurotrophic activity on mesencephalic dopaminergic and motor neurons. Acts by binding to its coreceptor, GFRA4, leading to autophosphorylation and activation of the RET receptor. May be important in C-cell development and, in the postnatal development of the adrenal medulla. This Homo sapiens (Human) protein is GDNF family receptor alpha-4 (GFRA4).